A 247-amino-acid chain; its full sequence is MAGHSKWANTKHRKAAQDSKRGKIFTKIIRELVTAAKLGGGDPGANPRLRAAIDKALSNNMTRDTLNRAIARGVGGDDDSNMETIIYEGYGPGGTAVMIECLSDNRNRTVAEVRHAFTKCGGNLGTDGSVAYLFTKKGVITYAPGLDEDVVMEAALEAGAEDIVSYDDGVIDVFTAWENLGEVKDALTAAGFTADSAEVSMIPSTKADMDEETAPKLLRLIDMLEDCDDVQEVYHNGEISDEVAATL.

It belongs to the TACO1 family.

The protein localises to the cytoplasm. The protein is Probable transcriptional regulatory protein Spro_2779 of Serratia proteamaculans (strain 568).